The chain runs to 356 residues: DNA polymerase IV (356 aa).

One can recognise a UmuC domain in the interval methionine 1–glycine 188. Residues aspartate 11 and aspartate 106 each contribute to the Mg(2+) site. Residue glutamate 107 is part of the active site.

This sequence belongs to the DNA polymerase type-Y family. Monomer. The cofactor is Mg(2+).

The protein localises to the cytoplasm. The enzyme catalyses DNA(n) + a 2'-deoxyribonucleoside 5'-triphosphate = DNA(n+1) + diphosphate. Its function is as follows. Poorly processive, error-prone DNA polymerase involved in untargeted mutagenesis. Copies undamaged DNA at stalled replication forks, which arise in vivo from mismatched or misaligned primer ends. These misaligned primers can be extended by PolIV. Exhibits no 3'-5' exonuclease (proofreading) activity. May be involved in translesional synthesis, in conjunction with the beta clamp from PolIII. The chain is DNA polymerase IV from Listeria monocytogenes serotype 4b (strain F2365).